Reading from the N-terminus, the 725-residue chain is IML2-like protein SCY_3392 (725 aa).

T196 carries the post-translational modification Phosphothreonine. Residues S246, S377, and S380 each carry the phosphoserine modification.

It belongs to the IML2 family.

It localises to the cytoplasm. The protein resides in the nucleus. In terms of biological role, may be involved in mitochondrial DNA stability. This Saccharomyces cerevisiae (strain YJM789) (Baker's yeast) protein is IML2-like protein SCY_3392.